The primary structure comprises 383 residues: 1-deoxy-D-xylulose 5-phosphate reductoisomerase (383 aa).

Residues Thr10, Gly11, Ser12, Ile13, and Asn123 each contribute to the NADPH site. Residue Lys124 participates in 1-deoxy-D-xylulose 5-phosphate binding. Glu125 is a binding site for NADPH. A Mn(2+)-binding site is contributed by Asp149. The 1-deoxy-D-xylulose 5-phosphate site is built by Ser150, Glu151, Ser175, and His198. A Mn(2+)-binding site is contributed by Glu151. Gly204 provides a ligand contact to NADPH. 1-deoxy-D-xylulose 5-phosphate-binding residues include Ser211, Asn216, Lys217, and Glu220. Glu220 is a binding site for Mn(2+).

This sequence belongs to the DXR family. Mg(2+) is required as a cofactor. It depends on Mn(2+) as a cofactor.

The catalysed reaction is 2-C-methyl-D-erythritol 4-phosphate + NADP(+) = 1-deoxy-D-xylulose 5-phosphate + NADPH + H(+). It functions in the pathway isoprenoid biosynthesis; isopentenyl diphosphate biosynthesis via DXP pathway; isopentenyl diphosphate from 1-deoxy-D-xylulose 5-phosphate: step 1/6. Catalyzes the NADPH-dependent rearrangement and reduction of 1-deoxy-D-xylulose-5-phosphate (DXP) to 2-C-methyl-D-erythritol 4-phosphate (MEP). This Desulfosudis oleivorans (strain DSM 6200 / JCM 39069 / Hxd3) (Desulfococcus oleovorans) protein is 1-deoxy-D-xylulose 5-phosphate reductoisomerase.